Consider the following 968-residue polypeptide: MHSWKKKLVVSQLALACTLAITSQANAANYDTWTYIDNPVTALDWDHMDKAGTVDGNYVNYSGFVYYNNTNGDFDQSFNGDTVNGTISTYYLNHDYADSTANQLDISNSVIHGSITSMLPGGYYDRFDADGNNLGGYDFYTDAVVDTHWRDGDVFTLNIANTTIDDDYEALYFTDSYKDGDVTKHTNETFDTSEGVAVNLDVESNINISNNSRVAGIALSQGNTYNETYTTESHTWDNNISVKDSTVTSGSNYILDSNTYGKTGHFGNSDEPSDYAGPGDVAMSFTASGSDYAMKNNVFLSNSTLMGDVAFTSTWNSNFDPNGHDSNGDGVKDTNGGWTDDSLNVDELNLTLDNGSKWVGQAIYNVAETSAMYDVATNSLTPDATYENNDWKRVVDDKVFQSGVFNVALNNGSEWDTTGRSIVDTLTVNNGSQVNVSESKLTSDTIDLTNGSSLNIGEDGYVDTDHLTINSYSTVALTESTGWGADYNLYANTITVTNGGVLDVNVDQFDTEAFRTDKLELTSGNIADHNGNVVSGVFDIHSSDYVLNADLVNDRTWDTSKSNYGYGIVAMNSDGHLTINGNGDVDNGTELDNSSVDNVVAATGNYKVRIDNATGAGAIADYKDKEIIYVNDVNSNATFSAANKADLGAYTYQAEQRGNTVVLQQMELTDYANMALSIPSANTNIWNLEQDTVGTRLTNSRHGLADNGGAWVSYFGGNFNGDNGTINYDQDVNGIMVGVDTKIDGNNAKWIVGAAAGFAKGDMNDRSGQVDQDSQTAYIYSSAHFANNVFVDGSLSYSHFNNDLSATMSNGTYVDGSTNSDAWGFGLKAGYDFKLGDAGYVTPYGSVSGLFQSGDDYQLSNDMKVDGQSYDSMRYELGVDAGYTFTYSEDQALTPYFKLAYVYDDSNNDNDVNGDSIDNGTEGSAVRVGLGTQFSFTKNFSAYTDANYLGGGDVDQDWSANVGVKYTW.

The first 27 residues, 1-27 (MHSWKKKLVVSQLALACTLAITSQANA), serve as a signal peptide directing secretion. One can recognise an Autotransporter domain in the interval 703–968 (GLADNGGAWV…SANVGVKYTW (266 aa)).

This is an uncharacterized protein from Escherichia coli (strain K12).